The following is an 80-amino-acid chain: Putative membrane protein insertion efficiency factor (80 aa).

A disordered region spans residues 61–80 (KTGKDPIPDHFSLKRNQEGE). Positions 62–80 (TGKDPIPDHFSLKRNQEGE) are enriched in basic and acidic residues.

This sequence belongs to the UPF0161 family.

Its subcellular location is the cell membrane. In terms of biological role, could be involved in insertion of integral membrane proteins into the membrane. This is Putative membrane protein insertion efficiency factor from Streptococcus pneumoniae (strain CGSP14).